We begin with the raw amino-acid sequence, 90 residues long: UPF0367 protein Npun_R4552 (90 aa).

The protein belongs to the UPF0367 family.

This Nostoc punctiforme (strain ATCC 29133 / PCC 73102) protein is UPF0367 protein Npun_R4552.